The sequence spans 195 residues: Capsid protein (195 aa).

The disordered stretch occupies residues 148 to 195 (NAPILSTLPETTVVRRRGRSPRRRTPSPRRRRSPSPRRRRSQSRESQC). Positions 161-188 (VRRRGRSPRRRTPSPRRRRSPSPRRRRS) are enriched in basic residues. S167, S174, and S182 each carry phosphoserine; by host. The 1; half-length repeat unit spans residues 167 to 172 (SPRRRT). The tract at residues 167–188 (SPRRRTPSPRRRRSPSPRRRRS) is 3 X 7 AA repeats of S-P-R-R-R-[PR]-S. The Bipartite nuclear localization signal signature appears at 170–187 (RRTPSPRRRRSPSPRRRR). 2 repeat units span residues 174–180 (SPRRRRS) and 182–188 (SPRRRRS). The interval 189-195 (QSRESQC) is RNA binding.

The protein belongs to the orthohepadnavirus core antigen family. Homodimerizes, then multimerizes. Interacts with cytosol exposed regions of viral L glycoprotein present in the reticulum-to-Golgi compartment. Interacts with human FLNB. Phosphorylated form interacts with host importin alpha; this interaction depends on the exposure of the NLS, which itself depends upon genome maturation and/or phosphorylation of the capsid protein. Interacts with host NUP153. Phosphorylated by host SRPK1, SRPK2, and maybe protein kinase C or GAPDH. Phosphorylation is critical for pregenomic RNA packaging. Protein kinase C phosphorylation is stimulated by HBx protein and may play a role in transport of the viral genome to the nucleus at the late step during the viral replication cycle.

Its subcellular location is the virion. The protein resides in the host cytoplasm. Its function is as follows. Self assembles to form an icosahedral capsid. Most capsids appear to be large particles with an icosahedral symmetry of T=4 and consist of 240 copies of capsid protein, though a fraction forms smaller T=3 particles consisting of 180 capsid proteins. Entering capsids are transported along microtubules to the nucleus. Phosphorylation of the capsid is thought to induce exposure of nuclear localization signal in the C-terminal portion of the capsid protein that allows binding to the nuclear pore complex via the importin (karyopherin-) alpha and beta. Capsids are imported in intact form through the nuclear pore into the nuclear basket, where it probably binds NUP153. Only capsids that contain the mature viral genome can release the viral DNA and capsid protein into the nucleoplasm. Immature capsids get stuck in the basket. Capsids encapsulate the pre-genomic RNA and the P protein. Pre-genomic RNA is reverse-transcribed into DNA while the capsid is still in the cytoplasm. The capsid can then either be directed to the nucleus, providing more genomes for transcription, or bud through the endoplasmic reticulum to provide new virions. The polypeptide is Capsid protein (Homo sapiens (Human)).